A 127-amino-acid polypeptide reads, in one-letter code: Small ribosomal subunit protein uS12 (127 aa).

A disordered region spans residues 8–28 (IRTEREKARQKTKSPALKQCP). Residue D89 is modified to 3-methylthioaspartic acid. Residues 102 to 127 (LDTAGVKDRKQGRSKYGTKRPKEAKK) are disordered. Residues 113–127 (GRSKYGTKRPKEAKK) show a composition bias toward basic residues.

Belongs to the universal ribosomal protein uS12 family. As to quaternary structure, part of the 30S ribosomal subunit. Contacts proteins S8 and S17. May interact with IF1 in the 30S initiation complex.

In terms of biological role, with S4 and S5 plays an important role in translational accuracy. Functionally, interacts with and stabilizes bases of the 16S rRNA that are involved in tRNA selection in the A site and with the mRNA backbone. Located at the interface of the 30S and 50S subunits, it traverses the body of the 30S subunit contacting proteins on the other side and probably holding the rRNA structure together. The combined cluster of proteins S8, S12 and S17 appears to hold together the shoulder and platform of the 30S subunit. This chain is Small ribosomal subunit protein uS12, found in Nostoc sp. (strain PCC 7120 / SAG 25.82 / UTEX 2576).